The primary structure comprises 369 residues: DNA replication and repair protein RecF (369 aa).

An ATP-binding site is contributed by 30 to 37 (GINAQGKT).

Belongs to the RecF family.

The protein localises to the cytoplasm. Its function is as follows. The RecF protein is involved in DNA metabolism; it is required for DNA replication and normal SOS inducibility. RecF binds preferentially to single-stranded, linear DNA. It also seems to bind ATP. The polypeptide is DNA replication and repair protein RecF (Macrococcus caseolyticus (strain JCSC5402) (Macrococcoides caseolyticum)).